The sequence spans 1239 residues: Anillin (1239 aa).

4 disordered regions span residues 32-67, 230-265, 493-621, and 684-716; these read CSVP…SGGG, EAPP…RTKQ, FDNQ…MCNG, and GSTQ…NSFS. Positions 53-63 are enriched in low complexity; that stretch reads RSRSPGGQSAA. An interaction with and bundling of F-actin region spans residues 126–371; that stretch reads EQAEGGALNP…ENKGTGGQSQ (246 aa). Basic and acidic residues predominate over residues 252–265; sequence PKKDEVDEASRTKQ. Positions 500-518 are enriched in low complexity; it reads SSVAAQARPPAPAPSRVVR. Over residues 519 to 528 the composition is skewed to pro residues; the sequence is PMPPPPPPPI. The segment covering 551–563 has biased composition (basic and acidic residues); it reads EDSKRARKSHSDR. Over residues 594–610 the composition is skewed to acidic residues; the sequence is DEEETESCMDESDDQSQ. Residues 699 to 716 are compositionally biased toward polar residues; that stretch reads ASRLSLGSKGTTASNSFS. Phosphoserine is present on Ser-712. Thr-740 carries the phosphothreonine modification. A phosphoserine mark is found at Ser-744 and Ser-754. A Phosphothreonine modification is found at Thr-831. The stretch at 834 to 861 forms a coiled coil; the sequence is DDEEMQNAREVNDASQAQDKIKKLLSEV. The PH domain maps to 1106 to 1230; it reads SVEYKGFLTM…WCAYLNKALT (125 aa).

In terms of assembly, interacts with and bundles F-actin. Accumulates in the ring canals that interconnect cells of the germline cysts in males and the ovarian follicles in females. These structures develop from arrested contractile rings after a specialized cytokinesis in which the closing of the invaginating plasma membrane is incomplete. Also concentrates in the arrested cleavage furrows that initially link the oocyte to its 15 nurse cells in the early egg chamber and is subsequently lost from these furrows as germline cell division is completed.

The protein localises to the nucleus. It localises to the cytoplasm. It is found in the cytoskeleton. Its subcellular location is the cell cortex. The protein resides in the cell projection. The protein localises to the cilium. It localises to the flagellum. Required for cytokinesis. Essential for the structural integrity of the cleavage furrow and for completion of cleavage furrow ingression and proper formation of the midbody. Required during cellularization of syncytial embryos for the proper formation and function of the furrow canals, the stable inward folds of the plasma membrane which separate the peripheral nuclei. Also required for the formation of the pole cells, the progenitors of the adult germline which are formed by cytokinesis of the cytoplasmic buds at the posterior pole of the syncytial embryo. Essential for embryonic viability. In Drosophila melanogaster (Fruit fly), this protein is Anillin (scra).